A 68-amino-acid polypeptide reads, in one-letter code: Acylphosphatase (68 aa).

The Acylphosphatase-like domain maps to 3-68; that stretch reads RIACTVHGRV…RCTAGLPSAP (66 aa). Active-site residues include R18 and N36.

This sequence belongs to the acylphosphatase family.

It catalyses the reaction an acyl phosphate + H2O = a carboxylate + phosphate + H(+). The protein is Acylphosphatase (acyP) of Oleidesulfovibrio alaskensis (strain ATCC BAA-1058 / DSM 17464 / G20) (Desulfovibrio alaskensis).